A 236-amino-acid polypeptide reads, in one-letter code: Protein CUSTOS (236 aa).

Disordered stretches follow at residues 1–57 (MSES…GTTP) and 83–236 (VEPA…KKDE). Composition is skewed to basic and acidic residues over residues 10–51 (NTAR…HDGN) and 156–165 (EKTEEKSTKE). The Nucleolar localization signal (NLS1) motif lies at 173–181 (KMKKKKKRK). Positions 182–196 (TSSEESQDKVNHQTE) are enriched in basic and acidic residues. Over residues 197–210 (KQSNVEGNQEQTTA) the composition is skewed to polar residues. The short motif at 211-219 (GERLKKKKK) is the Nucleolar localization signal (NLS2) element. The segment covering 214-227 (LKKKKKKKKKKRKK) has biased composition (basic residues).

The protein belongs to the CUSTOS family. In terms of assembly, interacts (via NLS1 and NLS2) with dvl2; the interaction is negatively regulated by Wnt stimulation. Interacts with csnk1a1. Interacts with ctnnb1; the interaction is positively regulated by Wnt stimulation. Phosphorylated by ck1/csnk1a1.

It localises to the nucleus envelope. Functionally, essential for Spemann-Mangold organizer formation and subsequent anterior head development in the embryo. Inhibits canonical Wnt signaling pathway by antagonizing nuclear import of beta-catenin (ctnnb1) during embryogenesis. The protein is Protein CUSTOS of Danio rerio (Zebrafish).